Here is a 442-residue protein sequence, read N- to C-terminus: 23S rRNA (uracil(1939)-C(5))-methyltransferase RlmD (442 aa).

The TRAM domain occupies 10 to 75 (AKQTAKNCCK…RQYGRAKANK (66 aa)). [4Fe-4S] cluster is bound by residues Cys88, Cys94, Cys97, and Cys173. S-adenosyl-L-methionine is bound by residues Gln276, Phe305, Asn310, Glu326, Asn353, and Asp374. The active-site Nucleophile is the Cys400.

The protein belongs to the class I-like SAM-binding methyltransferase superfamily. RNA M5U methyltransferase family. RlmD subfamily.

The catalysed reaction is uridine(1939) in 23S rRNA + S-adenosyl-L-methionine = 5-methyluridine(1939) in 23S rRNA + S-adenosyl-L-homocysteine + H(+). Its function is as follows. Catalyzes the formation of 5-methyl-uridine at position 1939 (m5U1939) in 23S rRNA. This Haemophilus ducreyi (strain 35000HP / ATCC 700724) protein is 23S rRNA (uracil(1939)-C(5))-methyltransferase RlmD.